A 567-amino-acid chain; its full sequence is Geranylgeranyl transferase type-2 subunit alpha (567 aa).

PFTA repeat units follow at residues 44-78, 88-122, 124-158, 159-193, 207-241, and 363-397; these read LDES…QLEV, LVKA…RLPE, NWAR…QAAV, PPAE…QLHP, VLLK…RADP, and VLQS…ALDP. At serine 98 the chain carries Phosphoserine. LRR repeat units follow at residues 442–463, 464–486, 487–508, 509–530, and 534–555; these read EVRV…EQLL, LVTH…AALR, CLEV…TNLP, RLQE…QPLT, and RLTL…SEHL.

It belongs to the protein prenyltransferase subunit alpha family. Heterotrimer composed of RABGGTA, RABGGTB and CHM; within this trimer, RABGGTA and RABGGTB form the catalytic component B, while CHM (component A) mediates peptide substrate binding. The Rab GGTase dimer (RGGT) interacts with CHM (component A) prior to Rab protein binding; the association is stabilized by geranylgeranyl pyrophosphate (GGpp). The CHM:RGGT:Rab complex is destabilized by GGpp. Interacts with non-phosphorylated form of RAB8A; phosphorylation of RAB8A at 'Thr-72' disrupts this interaction.

It catalyses the reaction geranylgeranyl diphosphate + L-cysteinyl-[protein] = S-geranylgeranyl-L-cysteinyl-[protein] + diphosphate. The enzymatic reaction requires the aid of a Rab escort protein (also called component A), such as CHM. Functionally, catalyzes the transfer of a geranylgeranyl moiety from geranylgeranyl diphosphate to both cysteines of Rab proteins with the C-terminal sequence -XXCC, -XCXC and -CCXX, such as RAB1A, RAB3A, RAB5A and RAB7A. The chain is Geranylgeranyl transferase type-2 subunit alpha (RABGGTA) from Bos taurus (Bovine).